A 61-amino-acid polypeptide reads, in one-letter code: Disintegrin atroxatin (61 aa).

One can recognise a Disintegrin domain in the interval 1 to 61 (NPCCDAATCK…ADCPRKGIYG (61 aa)). 5 disulfides stabilise this stretch: Cys-3/Cys-26, Cys-9/Cys-23, Cys-17/Cys-23, Cys-22/Cys-47, and Cys-35/Cys-54. The short motif at 39–41 (RGD) is the Cell attachment site element.

The protein belongs to the venom metalloproteinase (M12B) family. P-II subfamily. P-IIa sub-subfamily. Monomer (disintegrin). In terms of tissue distribution, expressed by the venom gland.

The protein localises to the secreted. In terms of biological role, inhibits fibrinogen interaction with platelets. Acts by binding to alpha-IIb/beta-3 (ITGA2B/ITGB3) on the platelet surface and inhibits aggregation induced by ADP, thrombin, platelet-activating factor and collagen. This is Disintegrin atroxatin from Crotalus atrox (Western diamondback rattlesnake).